Consider the following 192-residue polypeptide: Peptidyl-tRNA hydrolase (192 aa).

Tyrosine 14 contributes to the tRNA binding site. Catalysis depends on histidine 19, which acts as the Proton acceptor. Residues tyrosine 61, asparagine 63, and asparagine 107 each coordinate tRNA.

The protein belongs to the PTH family. As to quaternary structure, monomer.

It is found in the cytoplasm. It catalyses the reaction an N-acyl-L-alpha-aminoacyl-tRNA + H2O = an N-acyl-L-amino acid + a tRNA + H(+). Hydrolyzes ribosome-free peptidyl-tRNAs (with 1 or more amino acids incorporated), which drop off the ribosome during protein synthesis, or as a result of ribosome stalling. Its function is as follows. Catalyzes the release of premature peptidyl moieties from peptidyl-tRNA molecules trapped in stalled 50S ribosomal subunits, and thus maintains levels of free tRNAs and 50S ribosomes. This Wolinella succinogenes (strain ATCC 29543 / DSM 1740 / CCUG 13145 / JCM 31913 / LMG 7466 / NCTC 11488 / FDC 602W) (Vibrio succinogenes) protein is Peptidyl-tRNA hydrolase.